The sequence spans 321 residues: Lipoyl synthase (321 aa).

[4Fe-4S] cluster is bound by residues Cys68, Cys73, Cys79, Cys94, Cys98, Cys101, and Ser308. The 218-residue stretch at 80-297 (FNHGTATFMI…KEIALELGFT (218 aa)) folds into the Radical SAM core domain.

It belongs to the radical SAM superfamily. Lipoyl synthase family. Requires [4Fe-4S] cluster as cofactor.

It localises to the cytoplasm. It catalyses the reaction [[Fe-S] cluster scaffold protein carrying a second [4Fe-4S](2+) cluster] + N(6)-octanoyl-L-lysyl-[protein] + 2 oxidized [2Fe-2S]-[ferredoxin] + 2 S-adenosyl-L-methionine + 4 H(+) = [[Fe-S] cluster scaffold protein] + N(6)-[(R)-dihydrolipoyl]-L-lysyl-[protein] + 4 Fe(3+) + 2 hydrogen sulfide + 2 5'-deoxyadenosine + 2 L-methionine + 2 reduced [2Fe-2S]-[ferredoxin]. It participates in protein modification; protein lipoylation via endogenous pathway; protein N(6)-(lipoyl)lysine from octanoyl-[acyl-carrier-protein]: step 2/2. Catalyzes the radical-mediated insertion of two sulfur atoms into the C-6 and C-8 positions of the octanoyl moiety bound to the lipoyl domains of lipoate-dependent enzymes, thereby converting the octanoylated domains into lipoylated derivatives. The sequence is that of Lipoyl synthase from Vibrio vulnificus (strain CMCP6).